A 490-amino-acid chain; its full sequence is Hippocampus abundant transcript 1 protein (490 aa).

The residue at position 1 (methionine 1) is an N-acetylmethionine. The Extracellular portion of the chain corresponds to 1–40 (MTQGKKKKRAANRSIMLAKKIIIKDGGTPQGIGSPSVYHA). Asparagine 12 carries an N-linked (GlcNAc...) asparagine glycan. Residues 41-61 (VIVIFLEFFAWGLLTAPTLVV) traverse the membrane as a helical segment. Topologically, residues 62-74 (LHETFPKHTFLMN) are cytoplasmic. The chain crosses the membrane as a helical span at residues 75 to 95 (GLIQGVKGLLSFLSAPLIGAL). Topologically, residues 96 to 103 (SDVWGRKS) are extracellular. A helical transmembrane segment spans residues 104 to 124 (FLLLTVFFTCAPIPLMKISPW). Residues 125–126 (WY) are Cytoplasmic-facing. A helical transmembrane segment spans residues 127–147 (FAVISVSGVFAVTFSVVFAYV). The Extracellular segment spans residues 148 to 160 (ADITQEHERSMAY). A helical transmembrane segment spans residues 161–181 (GLVSATFAASLVTSPAIGAYL). Topologically, residues 182–188 (GRVYGDS) are cytoplasmic. Residues 189–209 (LVVVLATAIALLDICFILVAV) form a helical membrane-spanning segment. The Extracellular segment spans residues 210 to 243 (PESLPEKMRPASWGAPISWEQADPFASLKKVGQD). The chain crosses the membrane as a helical span at residues 244-264 (SIVLLICITVFLSYLPEAGQY). At 265-284 (SSFFLYLRQIMKFSPESVAA) the chain is on the cytoplasmic side. The helical transmembrane segment at 285-305 (FIAVLGILSIIAQTIVLSLLM) threads the bilayer. At 306–313 (RSIGNKNT) the chain is on the extracellular side. The chain crosses the membrane as a helical span at residues 314 to 334 (ILLGLGFQILQLAWYGFGSEP). Topologically, residues 335 to 337 (WMM) are cytoplasmic. Residues 338 to 358 (WAAGAVAAMSSITFPAVSALV) traverse the membrane as a helical segment. The Extracellular portion of the chain corresponds to 359-379 (SRTADADQQGVVQGMITGIRG). The chain crosses the membrane as a helical span at residues 380–400 (LCNGLGPALYGFIFYIFHVEL). The Cytoplasmic portion of the chain corresponds to 401-427 (KELPITGTDLGTNTSPQHHFEQNSIIP). Residues 428–448 (GPPFLFGACSVLLALLVALFI) traverse the membrane as a helical segment. Residues 449 to 490 (PEHTNLSLRSSSWRKHCGSHSHPHNTQAPGEAKEPLLQDTNV) lie on the Extracellular side of the membrane. Residue asparagine 453 is glycosylated (N-linked (GlcNAc...) asparagine). Positions 465–490 (CGSHSHPHNTQAPGEAKEPLLQDTNV) are disordered.

It belongs to the major facilitator superfamily.

It localises to the membrane. The polypeptide is Hippocampus abundant transcript 1 protein (Homo sapiens (Human)).